Here is a 1434-residue protein sequence, read N- to C-terminus: MDDLMDFFDSSKNFKRGTLPRGCISGDPNAYTSESSDSKPIKREIIGTKDVNEIVQKEQQLMNQLVGGPSNTKRTKTLDELESDDDDKMELNEAPTVRSDEAFYEKYHFDLNRNRSLPIYAQREQIMKAIKENPVVILKGETGCGKTTQVPQYILDEAFKKREFCNIVVTQPRRIAAISIANRVCQERRWQPGTVCSYQVGLHKQSNSADTRLLYCTTGVLLNNLIRLKTLTHYTHIVLDEVHDRDQDMDFLLIVVRRLLALNSRHVKVILMSATIDTREFCKYFASCKSMPPVVAASHGRKYPLVKYYRDQLKNINWKTEPQQREPGITHEGYRDAVKILLVIDNMERKAEGQSEQSYEEAKRTGSVLIFLPGVNEIDTMAEHIEHVMNESPNIKITIVRCHSLMSSDSQEDVFQPPLSGHRKVILTTNIAESSITVTDVSYVIDFCLAKVMHIDTASNFSCLCLEWASKVNCRQRAGRVGRTRSGRVYRMVTKAFYMEEMQEFGIPEMLRSPLQSSVLKAKELDMGGPSEILALAMSPPNLTDIHNTVLLLKEVGALYTTVDGVYEQLDGDLTYWGTIMSRFPLDVRLSRLIILGYIFNCLDEAIIIAAGMSVRSLYLSGQRQRTSDAFWMHYIFADGSGSDLVGFWRVYKIYVNMCQNLPMKDSEVQWARRYNVSLRSLKEMYLLVQELQKRCAALNLVSLPVGASHMWHDREKSIILKVIIAGAFYPNYFTRNNKTIPDYDRDVYHSICGNDPCRTVYFTQFVPRYMGELYTRRVKELFLEARIPPEKIDVTFQQGSEKIFVTFKGDDDDYMNSTDVVQVPGRVTTEVYKAIRMRMNNPNRSLRVMDQNSALKYVQQRNIGVVQDSKWVPPSKQWNVELLTLPSVFDKKITGLITYIVNCGKFYFQPRSLAERIASMTEIFNAPEQLSYHVRNASAITKGLQLLARRGSKFQRAVVLKVEPQSNAIPQFLVRFIDYGDWALLAMDQLRLMRHELRRDLEELPPRMFECRLALVQPSSVTSYSNRWPQKANEMLSKLASCGPLELEVYSLVNNVAAVLIHMRDGVLNDKLVEHQLARRADEDYMSRKDHDFRIRKQKMKRYVPAAEQQQVNEEYLRFNQLPQDADLEPPPLDKCHTSIRLKGPYSPLENSMNSMLRIGMYKSVAIEKESVNAVLLDADPQDRHDQMIVAASVTESDGNDKLVARGTTLMPNIHGFGALMAMLFCPTMQIKCNPERTKYVCLLAGLGFNPDTLEPYFQEHDMVINLDVGILKDDIRIINQMRYNIDSMFFNFDANELPAVGVEGRLVIFNQLRNLLTRLLGKDRSFIERHVWNSKYVWEDMSDLEPPSEPYGKRAIFPMHGSYDLESEDMGNLLALQENCSELYDWQNFDGVMQPRNCRLCNETLESVTQLRLHLLTQLHRDREKQVGWKQQ.

A disordered region spans residues 66–86 (VGGPSNTKRTKTLDELESDDD). Positions 127–294 (MKAIKENPVV…FASCKSMPPV (168 aa)) constitute a Helicase ATP-binding domain. 140–147 (GETGCGKT) is a binding site for ATP. Positions 240 to 243 (DEVH) match the DEAH box motif. Residues 354–526 (QSEQSYEEAK…SSVLKAKELD (173 aa)) enclose the Helicase C-terminal domain. In terms of domain architecture, Tudor spans 938-1001 (ASAITKGLQL…RLMRHELRRD (64 aa)).

This sequence belongs to the DEAD box helicase family. DEAH subfamily.

The protein resides in the cytoplasm. It catalyses the reaction ATP + H2O = ADP + phosphate + H(+). Functionally, probable ATP-binding RNA helicase which plays a central role during spermatogenesis and oogenesis by repressing transposable elements and preventing their mobilization, which is essential for the germline integrity. Acts via the piRNA metabolic process, which mediates the repression of transposable elements during meiosis by forming complexes composed of piRNAs and Piwi and govern the methylation and subsequent repression of transposons. Involved in the repression of LTR retrotransposon copia. Also involved in telomere regulation by repressing specialized telomeric retroelements HeT-A, TAHRE, and TART; Drosophila telomeres being maintained by transposition of specialized telomeric retroelements. Involved in telomeric trans-silencing, a repression mechanism by which a transposon or a transgene inserted in subtelomeric heterochromatin has the capacity to repress in trans in the female germline, a homologous transposon, or transgene located in euchromatin. Involved in the repression of testis-expressed Stellate genes by the homologous Su(Ste) repeats. Required for anteroposterior and dorsoventral axis formation during oogenesis. The polypeptide is Probable ATP-dependent RNA helicase spindle-E (spn-E) (Drosophila grimshawi (Hawaiian fruit fly)).